Reading from the N-terminus, the 212-residue chain is Ras-related protein Rab-43 (212 aa).

Gly25–Thr32 serves as a coordination point for GTP. Residues Gln47–Phe55 carry the Effector region motif. Residue Ser49 is modified to Phosphoserine. Asp73 to Gln77 lines the GTP pocket. Thr82 carries the phosphothreonine; by LRRK2 modification. Residues Asn131–Asp134 and Ala163–Lys164 each bind GTP. Position 193 is a phosphoserine (Ser193). S-geranylgeranyl cysteine attachment occurs at residues Cys210 and Cys212. Cysteine methyl ester is present on Cys212.

Belongs to the small GTPase superfamily. Rab family. As to quaternary structure, interacts with GDI1, GDI2, CHM and CHML; phosphorylation at Thr-82 disrupts these interactions. As to expression, widely expressed in brain, testis, lung, heart, ovary, colon, kidney, uterus and spleen but not in liver.

It localises to the cytoplasmic vesicle. Its subcellular location is the phagosome. It is found in the phagosome membrane. The protein localises to the golgi apparatus. The protein resides in the trans-Golgi network membrane. It localises to the trans-Golgi network. Functionally, the small GTPases Rab are key regulators of intracellular membrane trafficking, from the formation of transport vesicles to their fusion with membranes. Rabs cycle between an inactive GDP-bound form and an active GTP-bound form that is able to recruit to membranes different set of downstream effectors directly responsible for vesicle formation, movement, tethering and fusion. The low intrinsic GTPase activity of RAB43 is activated by USP6NL. Involved in retrograde transport from the endocytic pathway to the Golgi apparatus. Involved in the transport of Shiga toxin from early and recycling endosomes to the trans-Golgi network. Required for the structural integrity of the Golgi complex. Plays a role in the maturation of phagosomes that engulf pathogens, such as S.aureus and M.tuberculosis. The polypeptide is Ras-related protein Rab-43 (RAB43) (Homo sapiens (Human)).